Consider the following 774-residue polypeptide: E3 ubiquitin-protein ligase RFWD3 (774 aa).

2 disordered regions span residues 32 to 126 (GTIE…TAGA) and 203 to 281 (PYPL…SAME). Phosphoserine; by ATM and ATR occurs at positions 59 and 75. A compositionally biased stretch (acidic residues) spans 92-103 (LTEEVQPSEENM). The span at 108–121 (PGTSEEPSQGSGAN) shows a compositional bias: polar residues. A compositionally biased stretch (acidic residues) spans 223-242 (SDSDGSAEDEEVVVQAEEPE). An RING-type; degenerate zinc finger spans residues 288–332 (CTICLEQWTNAGDHRISALRCGHLFGFRCISKWLKGQTRKCPQCN). The stretch at 358–403 (RMKSDLLNEQMLRKQAELESAQCRLQLQVLIDKCTKLNSRVQDLEK) forms a coiled coil. WD repeat units lie at residues 493 to 535 (IPMH…VVQT), 536 to 568 (YNTG…LIYD), and 583 to 628 (KARC…SHKP).

In terms of assembly, interacts with MDM2 and p53/TP53. Binds to the RPA complex via direct interaction with RPA2. Interacts with RAD51. In terms of processing, phosphorylated at Ser-59 and Ser-75 upon DNA damage by ATM or ATR. ATM phosphorylation occurs at early times upon DNA damage, while ATR is the major kinase at later times. Phosphorylation by ATM and ATR is required to stabilize p53/TP53. Part of the phosphorylation depends upon RPA2 presence.

The protein localises to the nucleus. Its subcellular location is the PML body. The protein resides in the cytoplasm. The catalysed reaction is S-ubiquitinyl-[E2 ubiquitin-conjugating enzyme]-L-cysteine + [acceptor protein]-L-lysine = [E2 ubiquitin-conjugating enzyme]-L-cysteine + N(6)-ubiquitinyl-[acceptor protein]-L-lysine.. Its pathway is protein modification; protein ubiquitination. Its function is as follows. E3 ubiquitin-protein ligase required for the repair of DNA interstrand cross-links (ICL) in response to DNA damage. Plays a key role in RPA-mediated DNA damage signaling and repair. Acts by mediating ubiquitination of the RPA complex (RPA1, RPA2 and RPA3 subunits) and RAD51 at stalled replication forks, leading to remove them from DNA damage sites and promote homologous recombination. Also mediates the ubiquitination of p53/TP53 in the late response to DNA damage, and acts as a positive regulator of p53/TP53 stability, thereby regulating the G1/S DNA damage checkpoint. May act by catalyzing the formation of short polyubiquitin chains on p53/TP53 that are not targeted to the proteasome. In response to ionizing radiation, interacts with MDM2 and enhances p53/TP53 ubiquitination, possibly by restricting MDM2 from extending polyubiquitin chains on ubiquitinated p53/TP53. Required to translesion DNA synthesis across DNA-protein cross-link adducts by catalyzing ubiquitination of proteins on single-stranded DNA (ssDNA). The chain is E3 ubiquitin-protein ligase RFWD3 (Rfwd3) from Mus musculus (Mouse).